Here is a 282-residue protein sequence, read N- to C-terminus: U1 small nuclear ribonucleoprotein A (282 aa).

Ala-2 is subject to N-acetylalanine. An RRM 1 domain is found at 10 to 89 (HTIYINNLNE…KPMRIQYAKT (80 aa)). Residue Lys-60 is modified to N6-acetyllysine. A disordered region spans residues 100 to 132 (TFVERDRKREKRKPKSQETPATKKAVQGGGATP). A Phosphothreonine modification is found at Thr-131. Arg-152 carries the post-translational modification Omega-N-methylarginine. In terms of domain architecture, RRM 2 spans 208 to 282 (HILFLTNLPE…NAMKISFAKK (75 aa)).

The protein belongs to the RRM U1 A/B'' family. In terms of assembly, U1 snRNP is composed of the 7 core Sm proteins SNRPB, SNRPD1, SNRPD2, SNRPD3, SNRPE, SNRPF and SNRPG that assemble in a heptameric protein ring on the Sm site of the small nuclear RNA to form the core snRNP, and at least three U1 snRNP-specific proteins SNRNP70/U1-70K, SNRPA/U1-A and SNRPC/U1-C. Interacts with SFPQ; component of a snRNP-free complex with SFPQ. Interacts with IVNS1ABP (via BACK domain); the interaction is indirect.

The protein localises to the nucleus. In terms of biological role, component of the spliceosomal U1 snRNP, which is essential for recognition of the pre-mRNA 5' splice-site and the subsequent assembly of the spliceosome. U1 snRNP is the first snRNP to interact with pre-mRNA. This interaction is required for the subsequent binding of U2 snRNP and the U4/U6/U5 tri-snRNP. SNRPA binds stem loop II of U1 snRNA. In a snRNP-free form (SF-A) may be involved in coupled pre-mRNA splicing and polyadenylation process. May bind preferentially to the 5'-UGCAC-3' motif on RNAs. In Homo sapiens (Human), this protein is U1 small nuclear ribonucleoprotein A (SNRPA).